We begin with the raw amino-acid sequence, 396 residues long: Probable tRNA sulfurtransferase (396 aa).

In terms of domain architecture, THUMP spans 63 to 166 (AAAARASARV…GRRAYFFDTI (104 aa)). Residues 184 to 185 (LY), arginine 266, glycine 288, and glutamine 297 contribute to the ATP site.

Belongs to the ThiI family.

Its subcellular location is the cytoplasm. It carries out the reaction [ThiI sulfur-carrier protein]-S-sulfanyl-L-cysteine + a uridine in tRNA + 2 reduced [2Fe-2S]-[ferredoxin] + ATP + H(+) = [ThiI sulfur-carrier protein]-L-cysteine + a 4-thiouridine in tRNA + 2 oxidized [2Fe-2S]-[ferredoxin] + AMP + diphosphate. The catalysed reaction is [ThiS sulfur-carrier protein]-C-terminal Gly-Gly-AMP + S-sulfanyl-L-cysteinyl-[cysteine desulfurase] + AH2 = [ThiS sulfur-carrier protein]-C-terminal-Gly-aminoethanethioate + L-cysteinyl-[cysteine desulfurase] + A + AMP + 2 H(+). Its pathway is cofactor biosynthesis; thiamine diphosphate biosynthesis. In terms of biological role, catalyzes the ATP-dependent transfer of a sulfur to tRNA to produce 4-thiouridine in position 8 of tRNAs, which functions as a near-UV photosensor. Also catalyzes the transfer of sulfur to the sulfur carrier protein ThiS, forming ThiS-thiocarboxylate. This is a step in the synthesis of thiazole, in the thiamine biosynthesis pathway. The sulfur is donated as persulfide by IscS. In Aeropyrum pernix (strain ATCC 700893 / DSM 11879 / JCM 9820 / NBRC 100138 / K1), this protein is Probable tRNA sulfurtransferase.